The following is a 326-amino-acid chain: tRNA-modifying protein YgfZ (326 aa).

2 residues coordinate folate: Trp27 and Trp189.

It belongs to the tRNA-modifying YgfZ family.

The protein localises to the cytoplasm. Folate-binding protein involved in regulating the level of ATP-DnaA and in the modification of some tRNAs. It is probably a key factor in regulatory networks that act via tRNA modification, such as initiation of chromosomal replication. This chain is tRNA-modifying protein YgfZ, found in Escherichia coli O6:H1 (strain CFT073 / ATCC 700928 / UPEC).